The sequence spans 998 residues: Ephrin type-B receptor 3 (998 aa).

Positions 1–33 (MARARPPPPPSPPPGLLPLLPPLLLLPLLLLPA) are cleaved as a signal peptide. Over 34–559 (GCRALEETLM…AQQLQEQLPL (526 aa)) the chain is Extracellular. Residues 39 to 217 (EETLMDTKWV…FYKKCASTTA (179 aa)) enclose the Eph LBD domain. An intrachain disulfide couples Cys81 to Cys199. Fibronectin type-III domains lie at 339–451 (VPSP…TNQA) and 452–545 (APSE…TTSE). Asn351 and Asn445 each carry an N-linked (GlcNAc...) asparagine glycan. Residues 560–580 (IVGSATAGLVFVVAVVVIAIV) traverse the membrane as a helical segment. Over 581–998 (CLRKQRHGSD…QMNQTLPVQV (418 aa)) the chain is Cytoplasmic. At Tyr614 the chain carries Phosphotyrosine; by autocatalysis. The Protein kinase domain occupies 633-896 (VKIEEVIGAG…QIVNTLDKLI (264 aa)). ATP contacts are provided by residues 639 to 647 (IGAGEFGEV) and Lys665. The Proton acceptor role is filled by Asp758. The SAM domain occupies 925–989 (TTFTTVGDWL…LSSIQDMRLQ (65 aa)). The PDZ-binding signature appears at 996-998 (VQV).

Belongs to the protein kinase superfamily. Tyr protein kinase family. Ephrin receptor subfamily. As to quaternary structure, heterotetramer upon binding of the ligand. The heterotetramer is composed of an ephrin dimer and a receptor dimer. Oligomerization is probably required to induce biological responses. Phosphorylated. Autophosphorylates upon ligand-binding. Autophosphorylation on Tyr-614 is required for interaction with SH2 domain-containing proteins. Post-translationally, ubiquitinated by RNF186, mainly through 'Lys-48' and 'Lys-63'-linked polyubiquitin chains. In terms of tissue distribution, ubiquitous.

The protein localises to the cell membrane. The protein resides in the cell projection. It localises to the dendrite. It catalyses the reaction L-tyrosyl-[protein] + ATP = O-phospho-L-tyrosyl-[protein] + ADP + H(+). Functionally, receptor tyrosine kinase which binds promiscuously transmembrane ephrin-B family ligands residing on adjacent cells, leading to contact-dependent bidirectional signaling into neighboring cells. The signaling pathway downstream of the receptor is referred to as forward signaling while the signaling pathway downstream of the ephrin ligand is referred to as reverse signaling. Generally has an overlapping and redundant function with EPHB2. Like EPHB2, functions in axon guidance during development regulating for instance the neurons forming the corpus callosum and the anterior commissure, 2 major interhemispheric connections between the temporal lobes of the cerebral cortex. In addition to its role in axon guidance also plays an important redundant role with other ephrin-B receptors in development and maturation of dendritic spines and the formation of excitatory synapses. Controls other aspects of development through regulation of cell migration and positioning. This includes angiogenesis, palate development and thymic epithelium development for instance. Forward and reverse signaling through the EFNB2/EPHB3 complex also regulate migration and adhesion of cells that tubularize the urethra and septate the cloaca. Finally, plays an important role in intestinal epithelium differentiation segregating progenitor from differentiated cells in the crypt. This Homo sapiens (Human) protein is Ephrin type-B receptor 3 (EPHB3).